A 304-amino-acid polypeptide reads, in one-letter code: Sulfate adenylyltransferase subunit 2 (304 aa).

It belongs to the PAPS reductase family. CysD subfamily. In terms of assembly, heterodimer composed of CysD, the smaller subunit, and CysN.

The enzyme catalyses sulfate + ATP + H(+) = adenosine 5'-phosphosulfate + diphosphate. It participates in sulfur metabolism; hydrogen sulfide biosynthesis; sulfite from sulfate: step 1/3. Functionally, with CysN forms the ATP sulfurylase (ATPS) that catalyzes the adenylation of sulfate producing adenosine 5'-phosphosulfate (APS) and diphosphate, the first enzymatic step in sulfur assimilation pathway. APS synthesis involves the formation of a high-energy phosphoric-sulfuric acid anhydride bond driven by GTP hydrolysis by CysN coupled to ATP hydrolysis by CysD. The polypeptide is Sulfate adenylyltransferase subunit 2 (Acinetobacter baumannii (strain SDF)).